The sequence spans 158 residues: Transcriptional regulator MraZ (158 aa).

SpoVT-AbrB domains are found at residues 7–66 and 95–138; these read KEQH…EPSV and LDCV…APEK.

This sequence belongs to the MraZ family. In terms of assembly, forms oligomers.

Its subcellular location is the cytoplasm. The protein resides in the nucleoid. The polypeptide is Transcriptional regulator MraZ (Prosthecochloris aestuarii (strain DSM 271 / SK 413)).